Consider the following 262-residue polypeptide: Small ribosomal subunit protein uS2 (262 aa).

Residues 225–262 form a disordered region; it reads KQGEQLTEEAKPEDKEDEKGQAEEKEVKEENNSANKEE. Over residues 232-262 the composition is skewed to basic and acidic residues; the sequence is EEAKPEDKEDEKGQAEEKEVKEENNSANKEE.

Belongs to the universal ribosomal protein uS2 family.

This chain is Small ribosomal subunit protein uS2, found in Halothermothrix orenii (strain H 168 / OCM 544 / DSM 9562).